The primary structure comprises 344 residues: Adenosine kinase 1 (344 aa).

Aspartate 299 is an active-site residue.

Belongs to the carbohydrate kinase PfkB family. Interacts with the begomovirus AL2 protein and the curtovirus L2 protein. Mg(2+) serves as cofactor. Widely expressed.

It catalyses the reaction adenosine + ATP = AMP + ADP + H(+). It participates in purine metabolism; AMP biosynthesis via salvage pathway; AMP from adenosine: step 1/1. Its activity is regulated as follows. Inactivated by the begomovirus AL2 protein or the curtovirus L2 protein. Functionally, ATP dependent phosphorylation of adenosine and other related nucleoside analogs to monophosphate derivatives. Essential to sustain methyl recycling. This Arabidopsis thaliana (Mouse-ear cress) protein is Adenosine kinase 1.